The following is a 293-amino-acid chain: Pantothenate synthetase (293 aa).

ATP is bound at residue 38-45 (MGALHEGH). Residue His45 is the Proton donor of the active site. Gln69 is a binding site for (R)-pantoate. Gln69 contributes to the beta-alanine binding site. 155–158 (GEKD) contacts ATP. Gln161 contacts (R)-pantoate. 192–195 (QSSR) provides a ligand contact to ATP.

The protein belongs to the pantothenate synthetase family. Homodimer.

Its subcellular location is the cytoplasm. The catalysed reaction is (R)-pantoate + beta-alanine + ATP = (R)-pantothenate + AMP + diphosphate + H(+). It functions in the pathway cofactor biosynthesis; (R)-pantothenate biosynthesis; (R)-pantothenate from (R)-pantoate and beta-alanine: step 1/1. Catalyzes the condensation of pantoate with beta-alanine in an ATP-dependent reaction via a pantoyl-adenylate intermediate. This is Pantothenate synthetase from Hyphomonas neptunium (strain ATCC 15444).